Reading from the N-terminus, the 186-residue chain is Ribosome-recycling factor (186 aa).

The disordered stretch occupies residues 144–163 (EKDGVIGQDESRAQSERVQK).

It belongs to the RRF family.

It localises to the cytoplasm. In terms of biological role, responsible for the release of ribosomes from messenger RNA at the termination of protein biosynthesis. May increase the efficiency of translation by recycling ribosomes from one round of translation to another. This chain is Ribosome-recycling factor, found in Rhizobium etli (strain CIAT 652).